We begin with the raw amino-acid sequence, 179 residues long: Cell division protein SepF (179 aa).

Positions 19–55 (DSSLPYEKRDEPVFTSVNSSQEPALPMNQPSQSAGAK) are disordered. Over residues 33–55 (TSVNSSQEPALPMNQPSQSAGAK) the composition is skewed to polar residues.

Belongs to the SepF family. As to quaternary structure, homodimer. Interacts with FtsZ.

Its subcellular location is the cytoplasm. Its function is as follows. Cell division protein that is part of the divisome complex and is recruited early to the Z-ring. Probably stimulates Z-ring formation, perhaps through the cross-linking of FtsZ protofilaments. Its function overlaps with FtsA. This Streptococcus pneumoniae (strain JJA) protein is Cell division protein SepF.